Here is a 224-residue protein sequence, read N- to C-terminus: Deoxyribose-phosphate aldolase (224 aa).

D92 acts as the Proton donor/acceptor in catalysis. K155 serves as the catalytic Schiff-base intermediate with acetaldehyde. Residue K184 is the Proton donor/acceptor of the active site.

The protein belongs to the DeoC/FbaB aldolase family. DeoC type 1 subfamily.

Its subcellular location is the cytoplasm. The catalysed reaction is 2-deoxy-D-ribose 5-phosphate = D-glyceraldehyde 3-phosphate + acetaldehyde. It functions in the pathway carbohydrate degradation; 2-deoxy-D-ribose 1-phosphate degradation; D-glyceraldehyde 3-phosphate and acetaldehyde from 2-deoxy-alpha-D-ribose 1-phosphate: step 2/2. Its function is as follows. Catalyzes a reversible aldol reaction between acetaldehyde and D-glyceraldehyde 3-phosphate to generate 2-deoxy-D-ribose 5-phosphate. The polypeptide is Deoxyribose-phosphate aldolase (Shouchella clausii (strain KSM-K16) (Alkalihalobacillus clausii)).